A 70-amino-acid polypeptide reads, in one-letter code: Large ribosomal subunit protein bL31 (70 aa).

The Zn(2+) site is built by cysteine 16, cysteine 18, cysteine 37, and cysteine 40.

The protein belongs to the bacterial ribosomal protein bL31 family. Type A subfamily. In terms of assembly, part of the 50S ribosomal subunit. It depends on Zn(2+) as a cofactor.

In terms of biological role, binds the 23S rRNA. The sequence is that of Large ribosomal subunit protein bL31 from Psychromonas ingrahamii (strain DSM 17664 / CCUG 51855 / 37).